Reading from the N-terminus, the 296-residue chain is Large ribosomal subunit protein uL18B (296 aa).

The segment at 251–296 is disordered; it reads PVHEKKPKKEVKKKRWNRAKLSLEQKKDRVAQKKASFLRAQEKADS. The segment covering 255 to 268 has biased composition (basic residues); it reads KKPKKEVKKKRWNR. A compositionally biased stretch (basic and acidic residues) spans 271–281; that stretch reads LSLEQKKDRVA.

It belongs to the universal ribosomal protein uL18 family. As to quaternary structure, component of the large ribosomal subunit (LSU). Part of a LSU subcomplex, the 5S RNP which is composed of the 5S RNA, RPL5 and RPL11.

It is found in the cytoplasm. It localises to the nucleus. Its subcellular location is the nucleolus. In terms of biological role, component of the ribosome, a large ribonucleoprotein complex responsible for the synthesis of proteins in the cell. The small ribosomal subunit (SSU) binds messenger RNAs (mRNAs) and translates the encoded message by selecting cognate aminoacyl-transfer RNA (tRNA) molecules. The large subunit (LSU) contains the ribosomal catalytic site termed the peptidyl transferase center (PTC), which catalyzes the formation of peptide bonds, thereby polymerizing the amino acids delivered by tRNAs into a polypeptide chain. The nascent polypeptides leave the ribosome through a tunnel in the LSU and interact with protein factors that function in enzymatic processing, targeting, and the membrane insertion of nascent chains at the exit of the ribosomal tunnel. As part of the 5S RNP/5S ribonucleoprotein particle it is an essential component of the LSU, required for its formation and the maturation of rRNAs. It also couples ribosome biogenesis to p53/TP53 activation. As part of the 5S RNP it accumulates in the nucleoplasm and inhibits MDM2, when ribosome biogenesis is perturbed, mediating the stabilization and the activation of TP53. The chain is Large ribosomal subunit protein uL18B (rpl5-b) from Xenopus laevis (African clawed frog).